A 256-amino-acid chain; its full sequence is Small ribosomal subunit protein eS1 (256 aa).

Residues methionine 1 to lysine 18 show a composition bias toward basic residues. The disordered stretch occupies residues methionine 1–threonine 20. The residue at position 2 (alanine 2) is an N-acetylalanine; partial.

Belongs to the eukaryotic ribosomal protein eS1 family. Component of the small ribosomal subunit. Mature ribosomes consist of a small (40S) and a large (60S) subunit. The 40S subunit contains about 33 different proteins and 1 molecule of RNA (18S). The 60S subunit contains about 49 different proteins and 3 molecules of RNA (25S, 5.8S and 5S).

Its subcellular location is the cytoplasm. The chain is Small ribosomal subunit protein eS1 (rps1) from Aspergillus clavatus (strain ATCC 1007 / CBS 513.65 / DSM 816 / NCTC 3887 / NRRL 1 / QM 1276 / 107).